A 90-amino-acid polypeptide reads, in one-letter code: Small ribosomal subunit protein uS17 (90 aa).

It belongs to the universal ribosomal protein uS17 family. In terms of assembly, part of the 30S ribosomal subunit.

Its function is as follows. One of the primary rRNA binding proteins, it binds specifically to the 5'-end of 16S ribosomal RNA. In Burkholderia cenocepacia (strain ATCC BAA-245 / DSM 16553 / LMG 16656 / NCTC 13227 / J2315 / CF5610) (Burkholderia cepacia (strain J2315)), this protein is Small ribosomal subunit protein uS17.